The sequence spans 347 residues: Cyclic AMP-dependent transcription factor ATF-4 (347 aa).

A disordered region spans residues 202 to 296 (TPQCVKEEDT…AATRYRQKKR (95 aa)). Position 211 is a phosphothreonine (T211). Phosphoserine is present on residues S213, S217, S222, S229, and S233. The short motif at 213 to 222 (SDSDSGICMS) is the BetaTrCP degron motif element. Residues 228 to 238 (GSPQHSPSTSR) show a composition bias toward polar residues. 4-hydroxyproline is present on P234. Phosphoserine occurs at positions 243 and 246. Residues K256 and K268 each participate in a glycyl lysine isopeptide (Lys-Gly) (interchain with G-Cter in SUMO2) cross-link. Residues 269–283 (VKTEKLDKKLKKMEQ) show a composition bias toward basic and acidic residues. The bZIP domain occupies 274-337 (LDKKLKKMEQ…QYLKDLIEEV (64 aa)). The tract at residues 276 to 296 (KKLKKMEQNKTAATRYRQKKR) is basic motif. The interaction with GABBR1 stretch occupies residues 301 to 337 (ALTGECKELEKKNEALKEKADSLAKEIQYLKDLIEEV). A leucine-zipper region spans residues 302–330 (LTGECKELEKKNEALKEKADSLAKEIQYL). At K307 the chain carries N6-acetyllysine.

The protein belongs to the bZIP family. As to quaternary structure, binds DNA as a homodimer and as a heterodimer. Heterodimer; heterodimerizes with CEBPB. Heterodimer; heterodimerizes with DDIT3/CHOP. Interacts with CEP290 (via an N-terminal region). Interacts with NEK6, DAPK2 (isoform 2) and ZIPK/DAPK3. Interacts (via its leucine zipper domain) with GABBR1 and GABBR2 (via their C-termini). Forms a heterodimer with TXLNG in osteoblasts. Interacts (via its DNA binding domain) with FOXO1 (C-terminal half); the interaction occurs in osteoblasts and regulates glucose homeostasis through suppression of beta-cell proliferation and a decrease in insulin production. Interacts with SATB2; the interaction results in enhanced DNA binding and transactivation by these transcription factors. Interacts with ABRAXAS2. Interacts with TRIB3, inhibiting the transactivation activity of ATF4. Interacts with DISC1; which inhibits ATF4 transcription factor activity by disrupting ATF4 dimerization and DNA-binding. Interacts with EP300/p300; EP300/p300 stabilizes ATF4 and increases its transcriptional activity independently of its catalytic activity by preventing its ubiquitination. Ubiquitinated by SCF(BTRC) in response to mTORC1 signal, followed by proteasomal degradation and leading to down-regulate expression of SIRT4. Interaction with EP300/p300 inhibits ubiquitination by SCF(BTRC). Post-translationally, phosphorylation at Ser-243 by RPS6KA3/RSK2 in osteoblasts enhances transactivation activity and promotes osteoblast differentiation. Phosphorylated on the betaTrCP degron motif at Ser-217, followed by phosphorylation at Thr-211, Ser-222, Ser-229, Ser-233 and Ser-246, promoting interaction with BTRC and ubiquitination. Phosphorylation is promoted by mTORC1. Phosphorylation at Ser-213 by CK2 decreases its stability. Phosphorylated by NEK6. In terms of processing, hydroxylated by PHD3, leading to decreased protein stability. Expressed in brain, heart, liver, spleen, lung and muscle, but not testis.

Its subcellular location is the nucleus. It localises to the nucleus speckle. It is found in the cytoplasm. The protein resides in the cell membrane. The protein localises to the cytoskeleton. Its subcellular location is the microtubule organizing center. It localises to the centrosome. Functionally, transcription factor that binds the cAMP response element (CRE) (consensus: 5'-GTGACGT[AC][AG]-3') and displays two biological functions, as regulator of metabolic and redox processes under normal cellular conditions, and as master transcription factor during integrated stress response (ISR). Binds to asymmetric CRE's as a heterodimer and to palindromic CRE's as a homodimer. Core effector of the ISR, which is required for adaptation to various stress such as endoplasmic reticulum (ER) stress, amino acid starvation, mitochondrial stress or oxidative stress. During ISR, ATF4 translation is induced via an alternative ribosome translation re-initiation mechanism in response to EIF2S1/eIF-2-alpha phosphorylation, and stress-induced ATF4 acts as a master transcription factor of stress-responsive genes in order to promote cell recovery. Promotes the transcription of genes linked to amino acid sufficiency and resistance to oxidative stress to protect cells against metabolic consequences of ER oxidation. Activates the transcription of NLRP1, possibly in concert with other factors in response to ER stress. Activates the transcription of asparagine synthetase (ASNS) in response to amino acid deprivation or ER stress. However, when associated with DDIT3/CHOP, the transcriptional activation of the ASNS gene is inhibited in response to amino acid deprivation. Together with DDIT3/CHOP, mediates programmed cell death by promoting the expression of genes involved in cellular amino acid metabolic processes, mRNA translation and the terminal unfolded protein response (terminal UPR), a cellular response that elicits programmed cell death when ER stress is prolonged and unresolved. Activates the expression of COX7A2L/SCAF1 downstream of the EIF2AK3/PERK-mediated unfolded protein response, thereby promoting formation of respiratory chain supercomplexes and increasing mitochondrial oxidative phosphorylation. Together with DDIT3/CHOP, activates the transcription of the IRS-regulator TRIB3 and promotes ER stress-induced neuronal cell death by regulating the expression of BBC3/PUMA in response to ER stress. May cooperate with the UPR transcriptional regulator QRICH1 to regulate ER protein homeostasis which is critical for cell viability in response to ER stress. In the absence of stress, ATF4 translation is at low levels and it is required for normal metabolic processes such as embryonic lens formation, fetal liver hematopoiesis, bone development and synaptic plasticity. Acts as a regulator of osteoblast differentiation in response to phosphorylation by RPS6KA3/RSK2: phosphorylation in osteoblasts enhances transactivation activity and promotes expression of osteoblast-specific genes and post-transcriptionally regulates the synthesis of Type I collagen, the main constituent of the bone matrix. Cooperates with FOXO1 in osteoblasts to regulate glucose homeostasis through suppression of beta-cell production and decrease in insulin production. Activates transcription of SIRT4. Regulates the circadian expression of the core clock component PER2 and the serotonin transporter SLC6A4. Binds in a circadian time-dependent manner to the cAMP response elements (CRE) in the SLC6A4 and PER2 promoters and periodically activates the transcription of these genes. Mainly acts as a transcriptional activator in cellular stress adaptation, but it can also act as a transcriptional repressor: acts as a regulator of synaptic plasticity by repressing transcription, thereby inhibiting induction and maintenance of long-term memory. Regulates synaptic functions via interaction with DISC1 in neurons, which inhibits ATF4 transcription factor activity by disrupting ATF4 dimerization and DNA-binding. The polypeptide is Cyclic AMP-dependent transcription factor ATF-4 (Rattus norvegicus (Rat)).